Here is a 279-residue protein sequence, read N- to C-terminus: MKFVGAHVSASGGVDQAVIRAHELEATAFALFTKNQRQWKAAPLPADVIDKFKSACAQYGYGPGQILPHDSYLINLGHPVTEALEKSREAFLDEMQRCEQLGLTLLNFHPGSHLMQIDEDKCLARIAESINLVLDKTSGVTAVIENTAGQGSNLGFKFEHLAAIIDGVEDKSRVGVCIDTCHAFAAGYDLRTEETCEQTFKELGEVVGFNYLRGMHLNDAKSEFGSRVDRHHSLGEGNIGKTVFSYIMRDPRFDKIPLILETVNPDIWAEEIAWLKAQQ.

Residues His69, His109, Glu145, Asp179, His182, His216, Asp229, His231, and Glu261 each coordinate Zn(2+).

Belongs to the AP endonuclease 2 family. Requires Zn(2+) as cofactor.

It catalyses the reaction Endonucleolytic cleavage to 5'-phosphooligonucleotide end-products.. Its function is as follows. Endonuclease IV plays a role in DNA repair. It cleaves phosphodiester bonds at apurinic or apyrimidinic (AP) sites, generating a 3'-hydroxyl group and a 5'-terminal sugar phosphate. In Serratia proteamaculans (strain 568), this protein is Probable endonuclease 4.